The following is a 437-amino-acid chain: Probable carboxypeptidase HCBG_00059 (437 aa).

The first 20 residues, 1–20 (MKLSNLAALLSASTVAPVAA), serve as a signal peptide directing secretion. N-linked (GlcNAc...) asparagine glycosylation is present at Asn153. Position 163 (Asp163) interacts with Zn(2+). The active-site Proton acceptor is the Glu195. Glu196 provides a ligand contact to Zn(2+). N-linked (GlcNAc...) asparagine glycosylation is present at Asn346.

This sequence belongs to the peptidase M20A family. Zn(2+) is required as a cofactor.

It localises to the secreted. The protein is Probable carboxypeptidase HCBG_00059 of Ajellomyces capsulatus (strain G186AR / H82 / ATCC MYA-2454 / RMSCC 2432) (Darling's disease fungus).